A 391-amino-acid polypeptide reads, in one-letter code: Putative gustatory receptor 36a (391 aa).

Residues 1–3 (MFD) are Cytoplasmic-facing. The helical transmembrane segment at 4–24 (WVGLLLKVLYYYGQIIGLINF) threads the bilayer. At 25 to 38 (EIDWQRGRVVAAQR) the chain is on the extracellular side. The helical transmembrane segment at 39-59 (GILFAIAINVLICMVLLLQIS) threads the bilayer. Topologically, residues 60 to 73 (KKFNLDVYFGRANQ) are cytoplasmic. A helical transmembrane segment spans residues 74 to 94 (LHQYVIIVMVSLRMASGISAI). Residues 95 to 126 (LNRWRQRAQLMRLVECVLRLFLKKPHVKQMSR) lie on the Extracellular side of the membrane. A helical membrane pass occupies residues 127–147 (WAILVKFSVGVVSNFLQMAIS). Residues 148 to 165 (MESLDRLGFNEFVGMASD) are Cytoplasmic-facing. Residues 166–186 (FWMSAIINMAISQHYLVILFV) traverse the membrane as a helical segment. The Extracellular portion of the chain corresponds to 187-247 (RAYYHLLKTE…LQSIVTQLNQ (61 aa)). Residues 248-268 (VFGIQGIMVYGGYYIFSVATT) traverse the membrane as a helical segment. Over 269-290 (YITYSLAINGIEELHLSVRAAA) the chain is Cytoplasmic. Residues 291 to 311 (LVFSWFLFYYTSAILNLFVML) form a helical membrane-spanning segment. Topologically, residues 312-391 (KLFDDHKEME…FLIQYDMEYF (80 aa)) are extracellular.

This sequence belongs to the insect chemoreceptor superfamily. Gustatory receptor (GR) family. Gr22e subfamily.

Its subcellular location is the cell membrane. Its function is as follows. Probable gustatory receptor which mediates acceptance or avoidance behavior, depending on its substrates. In Drosophila melanogaster (Fruit fly), this protein is Putative gustatory receptor 36a (Gr36a).